Reading from the N-terminus, the 517-residue chain is MQPLSKLMAISKPRNLSLREQREVLRADMSWQQETNPVVETHDSEASRQKFRHFQYLKVSGPHEALSQLWELCLQWLRPEIHTKKQIIELLVLEQFLAILPEEVRTWVNLQHPNNSKDMVTLIEDVIEMLEDEDMPCKDSALQMGSIKEKMKAGSRTGKPQEPVTFKDVVVEFSKEEWGQLDSAVKNLYRNVMLENFRNLNSLRKAHLLSKPFESLKLESKKKRWIMEKEIPRKTIFDMKSISGEESSHGVIMTRLTESGHPSSDAWKGENWLYRNQKKWDINLPQEAFIPETIYTEEEDFECSENKKSFDINSVSSICAIQVGIPSRKGSPKCDKFKTYFKFNLDSVGKQHSEYEYGNDLSLSTDIRHQKSHTTMNSYECYQCGKAFCRSSSLIRHQIIHTGEKPYKCSECGRFFNRRTNLTKHQKLHAEAKACTSNKCGKAFSKSEDSNNPTLHFGNNFYQCVNCGKSFNRSSSLIRHQMIHTGEKPFKCKECSKAFNRSSNLVKHQKLHTRDKS.

The region spanning 48 to 126 (RQKFRHFQYL…KDMVTLIEDV (79 aa)) is the SCAN box domain. A KRAB domain is found at 164–237 (VTFKDVVVEF…EKEIPRKTIF (74 aa)). C2H2-type zinc fingers lie at residues 379 to 401 (YECY…QIIH), 407 to 429 (YKCS…QKLH), 462 to 484 (YQCV…QMIH), and 490 to 512 (FKCK…QKLH).

The protein belongs to the krueppel C2H2-type zinc-finger protein family.

It is found in the nucleus. May be involved in transcriptional regulation. In Homo sapiens (Human), this protein is Zinc finger protein 215 (ZNF215).